The following is a 486-amino-acid chain: 23S rRNA (uracil(1939)-C(5))-methyltransferase RlmD (486 aa).

A TRAM domain is found at 10-71 (TVKAPEYLPD…SSFEKAVVMA (62 aa)). The [4Fe-4S] cluster site is built by cysteine 84, cysteine 94, cysteine 97, and cysteine 176. The S-adenosyl-L-methionine site is built by glutamine 285, phenylalanine 314, asparagine 319, glutamate 335, asparagine 370, and aspartate 391. The active-site Nucleophile is cysteine 442.

This sequence belongs to the class I-like SAM-binding methyltransferase superfamily. RNA M5U methyltransferase family. RlmD subfamily.

The catalysed reaction is uridine(1939) in 23S rRNA + S-adenosyl-L-methionine = 5-methyluridine(1939) in 23S rRNA + S-adenosyl-L-homocysteine + H(+). In terms of biological role, catalyzes the formation of 5-methyl-uridine at position 1939 (m5U1939) in 23S rRNA. In Polaromonas sp. (strain JS666 / ATCC BAA-500), this protein is 23S rRNA (uracil(1939)-C(5))-methyltransferase RlmD.